The following is a 185-amino-acid chain: Adenine phosphoribosyltransferase (185 aa).

It belongs to the purine/pyrimidine phosphoribosyltransferase family. As to quaternary structure, homodimer.

It is found in the cytoplasm. The enzyme catalyses AMP + diphosphate = 5-phospho-alpha-D-ribose 1-diphosphate + adenine. It participates in purine metabolism; AMP biosynthesis via salvage pathway; AMP from adenine: step 1/1. In terms of biological role, catalyzes a salvage reaction resulting in the formation of AMP, that is energically less costly than de novo synthesis. The polypeptide is Adenine phosphoribosyltransferase (Arthrobacter sp. (strain FB24)).